The chain runs to 898 residues: Alanine--tRNA ligase (898 aa).

His-582, His-586, Cys-685, and His-689 together coordinate Zn(2+).

Belongs to the class-II aminoacyl-tRNA synthetase family. Zn(2+) is required as a cofactor.

Its subcellular location is the cytoplasm. It catalyses the reaction tRNA(Ala) + L-alanine + ATP = L-alanyl-tRNA(Ala) + AMP + diphosphate. Catalyzes the attachment of alanine to tRNA(Ala) in a two-step reaction: alanine is first activated by ATP to form Ala-AMP and then transferred to the acceptor end of tRNA(Ala). Also edits incorrectly charged Ser-tRNA(Ala) and Gly-tRNA(Ala) via its editing domain. This is Alanine--tRNA ligase from Mycolicibacterium gilvum (strain PYR-GCK) (Mycobacterium gilvum (strain PYR-GCK)).